Here is a 332-residue protein sequence, read N- to C-terminus: MAVFTAVSDSDLAQWMRHYELGDVLAFRGIPSGIENSNFFLTTTRGEYVLTIFEKLTAEQLPFYLDLMRHLASHGVPVPDPIPRDDGALFGLLHGKPAAIVTKLDGAAELAPGIEHCIEVGQMLARLHLAGRDYARYQPNLRSLPWWRENVPAIVPFVSDAQRTLLEGELAHQAAFFASDDYAALPSGPCHCDLFRDNVLFAHAAPGTGHDVRLGGFFDFYFAGCDKWLFDVAVTVNDWCVDLATGVLDVARADALLRAYQTVRPFTAPERRHWSDMLRAGAYRFWVSRLYDFYLPRAAEMLKPHDPGHFERILRERIANTPALPETHTACN.

This sequence belongs to the pseudomonas-type ThrB family.

It catalyses the reaction L-homoserine + ATP = O-phospho-L-homoserine + ADP + H(+). Its pathway is amino-acid biosynthesis; L-threonine biosynthesis; L-threonine from L-aspartate: step 4/5. This Burkholderia ambifaria (strain ATCC BAA-244 / DSM 16087 / CCUG 44356 / LMG 19182 / AMMD) (Burkholderia cepacia (strain AMMD)) protein is Homoserine kinase.